The following is a 241-amino-acid chain: Probable transcriptional regulator PhnF (241 aa).

One can recognise an HTH gntR-type domain in the interval 11–78 (PTRYQEIAAK…QGVGVLVLMR (68 aa)). Positions 38-57 (EQQLAARFEVNRHTLRRAID) form a DNA-binding region, H-T-H motif.

Belongs to an operon involved in alkylphosphonate uptake and C-P lyase. Exact function not known. By similarity could be a transcriptional regulator. This Escherichia coli (strain K12) protein is Probable transcriptional regulator PhnF (phnF).